The following is a 427-amino-acid chain: Glutamate-1-semialdehyde 2,1-aminomutase (427 aa).

An N6-(pyridoxal phosphate)lysine modification is found at lysine 265.

Belongs to the class-III pyridoxal-phosphate-dependent aminotransferase family. HemL subfamily. In terms of assembly, homodimer. Pyridoxal 5'-phosphate is required as a cofactor.

It localises to the cytoplasm. The enzyme catalyses (S)-4-amino-5-oxopentanoate = 5-aminolevulinate. The protein operates within porphyrin-containing compound metabolism; protoporphyrin-IX biosynthesis; 5-aminolevulinate from L-glutamyl-tRNA(Glu): step 2/2. The sequence is that of Glutamate-1-semialdehyde 2,1-aminomutase from Photorhabdus laumondii subsp. laumondii (strain DSM 15139 / CIP 105565 / TT01) (Photorhabdus luminescens subsp. laumondii).